A 590-amino-acid chain; its full sequence is Oligoendopeptidase F homolog (590 aa).

Histidine 381 contributes to the Zn(2+) binding site. Glutamate 382 is a catalytic residue. Positions 385 and 388 each coordinate Zn(2+).

Belongs to the peptidase M3B family. Zn(2+) is required as a cofactor.

This is Oligoendopeptidase F homolog (pepF) from Borreliella burgdorferi (strain ATCC 35210 / DSM 4680 / CIP 102532 / B31) (Borrelia burgdorferi).